Consider the following 848-residue polypeptide: MVDWLSLLPWNKIFTAACGCFLSDSNYIHLMESNLDALQKTMEELKNGRDDLLARVSIEEDKGLQRLALVNGWLSRVQIVESEFKDLLEAMSIETGRLCLFGYCSEDCISSYNYGGKVMKNLEEVKELLSKKNFEVVAQKIIPKAEKKHIQTTVGLDTMVGIAWESLIDDEIRTLGLYGMGGIGKTTLLESLNNKFVELESEFDVVIWVVVSKDFQLEGIQDQILGRLRPDKEWERETESKKASLINNNLKRKKFVLLLDDLWSEVDLIKIGVPPPSRENGSKIVFTTRSKEVCKHMKADKQIKVDCLSPDEAWELFRLTVGDIILRSHQDIPALARIVAAKCHGLPLALNVIGKAMVCKETVQEWRHAINVLNSPGHKFPGMEERILPILKFSYDSLKNGEIKLCFLYCSLFPEDFEIEKDKLIEYWICEGYINPNRYEDGGTNQGYDIIGLLVRAHLLIECELTDKVKMHDVIREMALWINSDFGNQQETICVKSGAHVRLIPNDISWEIVRQMSLISTQVEKIACSPNCPNLSTLLLPYNKLVDISVGFFLFMPKLVVLDLSTNWSLIELPEEISNLGSLQYLNLSLTGIKSLPVGLKKLRKLIYLNLEFTNVLESLVGIATTLPNLQVLKLFYSLFCVDDIIMEELQRLKHLKILTATIEDAMILERVQGVDRLASSIRGLCLRNMSAPRVILNSVALGGLQQLGIVSCNISEIEIDWLSKERRDHRSTSSPGFKQLASITVIGLVGPRDLSWLLFAQNLKDIQVQYSPTIEEIINKQKGMSITKVHRDIVVPFGKLESLHLYQLAELTEICWNYQTLPNLRESYVNYCPKLLEDIANFPKLKG.

A coiled-coil region spans residues 25 to 62 (SNYIHLMESNLDALQKTMEELKNGRDDLLARVSIEEDK). One can recognise an NB-ARC domain in the interval 137-439 (VAQKIIPKAE…CEGYINPNRY (303 aa)). 179-186 (GMGGIGKT) contributes to the ATP binding site. 5 LRR repeats span residues 534-555 (NLST…FFLF), 558-580 (KLVV…ISNL), 582-604 (SLQY…KKLR), 605-627 (KLIY…ATTL), and 629-649 (NLQV…IMEE).

It belongs to the disease resistance NB-LRR family.

In terms of biological role, probable disease resistance protein. The sequence is that of Probable disease resistance protein At5g43730 from Arabidopsis thaliana (Mouse-ear cress).